We begin with the raw amino-acid sequence, 262 residues long: 2-keto-4-pentenoate hydratase (262 aa).

This sequence belongs to the hydratase/decarboxylase family. MhpD subfamily. It depends on a divalent metal cation as a cofactor.

It carries out the reaction (S)-4-hydroxy-2-oxopentanoate = (2Z)-2-hydroxypenta-2,4-dienoate + H2O. Its pathway is aromatic compound metabolism; 3-phenylpropanoate degradation. Its function is as follows. Catalyzes the conversion of 2-hydroxypentadienoic acid (enolic form of 2-oxopent-4-enoate) to 4-hydroxy-2-ketopentanoic acid. This Burkholderia vietnamiensis (strain G4 / LMG 22486) (Burkholderia cepacia (strain R1808)) protein is 2-keto-4-pentenoate hydratase.